The following is a 249-amino-acid chain: Phosphate import ATP-binding protein PstB (249 aa).

Positions 5 to 244 (LRIEDLHFWY…PEKDRTEAYV (240 aa)) constitute an ABC transporter domain. 37–44 (GPSGCGKS) is a binding site for ATP.

Belongs to the ABC transporter superfamily. Phosphate importer (TC 3.A.1.7) family. The complex is composed of two ATP-binding proteins (PstB), two transmembrane proteins (PstC and PstA) and a solute-binding protein (PstS).

The protein resides in the cell inner membrane. The enzyme catalyses phosphate(out) + ATP + H2O = ADP + 2 phosphate(in) + H(+). Its function is as follows. Part of the ABC transporter complex PstSACB involved in phosphate import. Responsible for energy coupling to the transport system. This Salinibacter ruber (strain DSM 13855 / M31) protein is Phosphate import ATP-binding protein PstB.